A 118-amino-acid chain; its full sequence is Cell division topological specificity factor (118 aa).

Positions 86–118 (RSQAKAVSSQENGASSQEAVSSQESVSTPGAME) are disordered. Low complexity predominate over residues 99–112 (ASSQEAVSSQESVS).

It belongs to the MinE family.

Its function is as follows. Prevents the cell division inhibition by proteins MinC and MinD at internal division sites while permitting inhibition at polar sites. This ensures cell division at the proper site by restricting the formation of a division septum at the midpoint of the long axis of the cell. This Prochlorococcus marinus (strain MIT 9313) protein is Cell division topological specificity factor.